Here is a 393-residue protein sequence, read N- to C-terminus: MTRVVLAAAYRTPIGVFGGAFKDVPAYDLGATLIEHIIKETGLNPSEINEVIIGNVLQAGQGQNPARIAAMKGGLPETVPVFTVNKVCGSGLKSIQLAYQSIVTGENDIVLAGGMENMSQSPMLVNNSRFGFKMGHQSMVDSMVYDGLTDVFNQYHMGITAENLVEQYGISREEQDTFAVNSQKKAANAQQNGGFDSEIVPVSIPQRKGEPIVVTKDEGVRENVSVEKLSRLRPAFKKDGTVTAGNASGINDGAAMMLVMSEDKAKELNIEPLAVLDGFGSHGVDPSIMGIAPVGAVEKALKRSKKELSDIDVFELNEAFAAQSLAVDRELKLPPEKVNVKGGAIALGHPIGASGARVLVTLLHQLNDEVETGLTSLCIGGGQAIAAVVSKYK.

Residue C88 is the Acyl-thioester intermediate of the active site. Residues H349 and C378 each act as proton acceptor in the active site.

This sequence belongs to the thiolase-like superfamily. Thiolase family.

The protein localises to the cytoplasm. The enzyme catalyses 2 acetyl-CoA = acetoacetyl-CoA + CoA. In Staphylococcus aureus (strain bovine RF122 / ET3-1), this protein is Probable acetyl-CoA acyltransferase.